The chain runs to 1446 residues: Toll-like receptor 7 (1446 aa).

The signal sequence occupies residues 1–16 (MAAILLLLLGFSWSLA). At 17–1049 (VESALAPKES…QHGIPESYIP (1033 aa)) the chain is on the extracellular side. LRR repeat units lie at residues 133-156 (LQTLEALRLDSCKLLQLPNNAFEG), 158-180 (ATLKSLRLSTHNSEWGPTRTLEL), 188-211 (LKQLTDLDLGDNNLRQLPSGFLCP), 213-235 (GNLQVLNLTRNRIRTAEQMGFAD), 246-270 (GSELQVLDASHNELRSISESWGISR), 271-294 (LRRLQHLNLAYNNLSELSGEALAG), 295-318 (LASLRIVNLSNNHLETLPEGLFAG), 320-342 (KELREIHLQQNELYELPKGLFHR), 344-368 (EQLLVVDLSGNQLTSNHVDNTTFAG), 369-392 (LIRLIVLNLAHNALTRIDYRTFKE), 393-416 (LYFLQILNLRNNSIGHIEDNAFLP), 417-440 (LYNLHTLNLAENRLHTLDDKLFNG), 442-464 (YVLSKLTLNNNLISVVEPAVFKN), 465-488 (CSDLKELDLSSNQLNEVPRALQDL), 489-511 (AMLRTLDLGENQIRTFDNQSFKN), 513-535 (HQLTGLRLIDNQIGNITVGMFQD), 536-559 (LPRLSVLNLAKNRIQSIERGSFDK), 561-582 (FELEAIRLDRNFLADINGVFAT), 584-605 (VSLLWLNLSENHLVWFDYAFIP), 606-629 (SNLKWLDIHGNYIEALGNYYKLQE), 631-652 (IRVKTLDASHNRITEIGPMSIP), 653-675 (NTIELLFINNNLIGNVQPNAFVD), and 677-699 (ANLARVDLYANQLSKLQLQQLRV). One can recognise an LRRCT domain in the interval 716–773 (NPFECDCTMDWLQRINNLTTRQHPRVMDMANIECVMPHARGAAVRPLSGLRPQDFLCR). Intrachain disulfides connect Cys-722-Cys-772, Cys-796-Cys-802, and Cys-800-Cys-815. 6 LRR repeats span residues 828 to 851 (PMDSSVVYLDGNNFPVLKNHAFIG), 852 to 875 (RKNLRALYVNGSQVAAIQNRTFAS), 876 to 899 (LASLQLLHLADNKLRTLHGYEFEQ), 900 to 923 (LSALRELYLQNNQLTTIENATLAP), 925 to 947 (AALELIRIDGNRLVTLPIWQMHA), and 951 to 979 (GTRLKSISLGRNQWSCRCQFLQALTSYVA). The cysteines at positions 966 and 993 are disulfide-linked. A helical transmembrane segment spans residues 1050–1070 (LLAAALALLFLLVVIAMVFAF). Over 1071-1446 (RESLRIWLFA…QGPHVQAYLV (376 aa)) the chain is Cytoplasmic. The region spanning 1096 to 1233 (KLYDAVLLHS…HFWEKLRYAL (138 aa)) is the TIR domain. 2 disordered regions span residues 1301 to 1332 (QNYSTATTATPSPRPQRRGEQPGSGSGGNHHL) and 1388 to 1446 (RPKR…AYLV). Polar residues predominate over residues 1395-1413 (HLQQAQAGTLGSKASQAAH). Low complexity predominate over residues 1414-1426 (QQQQQQQQQQQQQ). The segment covering 1427–1439 (PNPTAVSGQQQGP) has biased composition (polar residues).

Belongs to the Toll-like receptor family. As to expression, expressed in the fan-shaped body and the ellipsoid body, which are components of the locomotion center in the CNS (at protein level).

The protein resides in the cell membrane. Its function is as follows. Toll-related receptor which binds to the neurotrophins NT1 and spz5. Essential for antiviral autophagy, it detects and binds to the vesicular stomatitis virus (vsv) following infection. This role is likely to be independent of the canonical Toll, immune deficiency, and JAK-STAT signaling pathways. Functions in olfactory circuit assembly by promoting synaptic partner matching between olfactory receptor neurons (ORN) axons and projection neurons (PN) dendrites partners in the antennal lobe. Function in the Va1d ORNs is necessary and sufficient for correct targeting to their partner PN dendrites. Also involved in the targeting of other classes of ORN axons. Functions with Toll-6 to regulate motor axon targeting and neuronal survival in the central nervous system (CNS). May be an upstream component of the NF-kappa-B (rel) regulatory cascade. The chain is Toll-like receptor 7 from Drosophila melanogaster (Fruit fly).